Here is a 487-residue protein sequence, read N- to C-terminus: Glutamyl-tRNA(Gln) amidotransferase subunit A (487 aa).

Catalysis depends on charge relay system residues lysine 79 and serine 158. Serine 182 functions as the Acyl-ester intermediate in the catalytic mechanism.

Belongs to the amidase family. GatA subfamily. Heterotrimer of A, B and C subunits.

The catalysed reaction is L-glutamyl-tRNA(Gln) + L-glutamine + ATP + H2O = L-glutaminyl-tRNA(Gln) + L-glutamate + ADP + phosphate + H(+). In terms of biological role, allows the formation of correctly charged Gln-tRNA(Gln) through the transamidation of misacylated Glu-tRNA(Gln) in organisms which lack glutaminyl-tRNA synthetase. The reaction takes place in the presence of glutamine and ATP through an activated gamma-phospho-Glu-tRNA(Gln). The sequence is that of Glutamyl-tRNA(Gln) amidotransferase subunit A from Ehrlichia ruminantium (strain Welgevonden).